The following is a 120-amino-acid chain: Large ribosomal subunit protein uL18 (120 aa).

Belongs to the universal ribosomal protein uL18 family. As to quaternary structure, part of the 50S ribosomal subunit; part of the 5S rRNA/L5/L18/L25 subcomplex. Contacts the 5S and 23S rRNAs.

Its function is as follows. This is one of the proteins that bind and probably mediate the attachment of the 5S RNA into the large ribosomal subunit, where it forms part of the central protuberance. The protein is Large ribosomal subunit protein uL18 of Nitrobacter winogradskyi (strain ATCC 25391 / DSM 10237 / CIP 104748 / NCIMB 11846 / Nb-255).